Consider the following 155-residue polypeptide: MKIQLIAVGTKMPAWVEHGFEEYRRRFPKDMPFELVEIGAGKRGKNADIPRILQKEGEAMLAAAGRSRIVTLDIPGKPWTTEQLAVQLEAWKLDGRDVALLVGGPEGLSPECKAAAEQSWSLSPLTLPHPLVRVLVAESLYRAWSITTNHPYHRE.

S-adenosyl-L-methionine is bound by residues Leu-72, Gly-103, and Leu-122–Leu-127.

This sequence belongs to the RNA methyltransferase RlmH family. In terms of assembly, homodimer.

The protein resides in the cytoplasm. The enzyme catalyses pseudouridine(1915) in 23S rRNA + S-adenosyl-L-methionine = N(3)-methylpseudouridine(1915) in 23S rRNA + S-adenosyl-L-homocysteine + H(+). Its function is as follows. Specifically methylates the pseudouridine at position 1915 (m3Psi1915) in 23S rRNA. In Aeromonas hydrophila subsp. hydrophila (strain ATCC 7966 / DSM 30187 / BCRC 13018 / CCUG 14551 / JCM 1027 / KCTC 2358 / NCIMB 9240 / NCTC 8049), this protein is Ribosomal RNA large subunit methyltransferase H.